The sequence spans 66 residues: Large ribosomal subunit protein bL35 (66 aa).

This sequence belongs to the bacterial ribosomal protein bL35 family.

The polypeptide is Large ribosomal subunit protein bL35 (Thermodesulfovibrio yellowstonii (strain ATCC 51303 / DSM 11347 / YP87)).